The primary structure comprises 594 residues: Arginine--tRNA ligase (594 aa).

The 'HIGH' region motif lies at 133-143; it reads ANPTGPMNIVS.

This sequence belongs to the class-I aminoacyl-tRNA synthetase family. Monomer.

Its subcellular location is the cytoplasm. It carries out the reaction tRNA(Arg) + L-arginine + ATP = L-arginyl-tRNA(Arg) + AMP + diphosphate. The sequence is that of Arginine--tRNA ligase from Leptospira biflexa serovar Patoc (strain Patoc 1 / Ames).